The primary structure comprises 185 residues: Intraflagellar transport protein 22 homolog (185 aa).

GTP contacts are provided by residues 10 to 17 (GPCESGKT), 63 to 67 (DCGGD), and 123 to 126 (HKPG). Serine 137 is subject to Phosphoserine.

Belongs to the small GTPase superfamily. Rab family. In terms of assembly, component of the IFT complex B, at least composed of IFT20, IFT22, IFT25, IFT27, IFT46, IFT52, TRAF3IP1/IFT54, IFT57, IFT74, IFT80, IFT81, and IFT88. Interacts with IFT88. Interacts with CFAP61.

It localises to the cell projection. The protein resides in the cilium. In terms of biological role, small GTPase-like component of the intraflagellar transport (IFT) complex B. This Homo sapiens (Human) protein is Intraflagellar transport protein 22 homolog (IFT22).